The primary structure comprises 876 residues: DNA topoisomerase 1 (876 aa).

A Toprim domain is found at 3–150 (KSLVIVESPA…RYKRVVFNEI (148 aa)). Glutamate 9 contributes to the Mg(2+) binding site. The interval 37-69 (LPTAGQTATPTGKAAAASTKKASTTDKEQQKRE) is disordered. The span at 38–58 (PTAGQTATPTGKAAAASTKKA) shows a compositional bias: low complexity. Over residues 59–69 (STTDKEQQKRE) the composition is skewed to basic and acidic residues. Aspartate 119 lines the Mg(2+) pocket. Residues 166–582 (NMDGVNAQQA…EFFADFSRDL (417 aa)) enclose the Topo IA-type catalytic domain. Positions 200–205 (SAGRVQ) are interaction with DNA. The active-site O-(5'-phospho-DNA)-tyrosine intermediate is the tyrosine 327. 2 C4-type zinc fingers span residues 668–695 (CPIC…NPNC) and 717–742 (CDKC…NDAC).

It belongs to the type IA topoisomerase family. As to quaternary structure, monomer. It depends on Mg(2+) as a cofactor.

It carries out the reaction ATP-independent breakage of single-stranded DNA, followed by passage and rejoining.. Functionally, releases the supercoiling and torsional tension of DNA, which is introduced during the DNA replication and transcription, by transiently cleaving and rejoining one strand of the DNA duplex. Introduces a single-strand break via transesterification at a target site in duplex DNA. The scissile phosphodiester is attacked by the catalytic tyrosine of the enzyme, resulting in the formation of a DNA-(5'-phosphotyrosyl)-enzyme intermediate and the expulsion of a 3'-OH DNA strand. The free DNA strand then undergoes passage around the unbroken strand, thus removing DNA supercoils. Finally, in the religation step, the DNA 3'-OH attacks the covalent intermediate to expel the active-site tyrosine and restore the DNA phosphodiester backbone. In Vibrio cholerae serotype O1 (strain ATCC 39315 / El Tor Inaba N16961), this protein is DNA topoisomerase 1.